The primary structure comprises 1515 residues: DNA topoisomerase 2-binding protein 1 (1515 aa).

BRCT domains lie at 101–189 and 195–284; these read VYNM…KYTD and FKCP…IYKA. Threonine 298 carries the post-translational modification Phosphothreonine. 3 BRCT domains span residues 353–443, 551–636, and 644–741; these read APED…SYIH, REEG…SNPL, and SGVT…HFLV. An interaction with CIP2A region spans residues 759 to 893; the sequence is VSSNPDLPAH…TDSHSASPQL (135 aa). Residue threonine 782 is modified to Phosphothreonine. Residues 799-826 form a disordered region; sequence SQQRGQDPTFPPVRQPLTKEPSLHLDTP. Threonine 851 bears the Phosphothreonine mark. A phosphoserine mark is found at serine 862, serine 863, serine 866, serine 888, and serine 890. Positions 880–891 are enriched in polar residues; sequence SSRNTDSHSASP. The disordered stretch occupies residues 880 to 901; sequence SSRNTDSHSASPQLKGAHLEEE. Residues 902–993 enclose the BRCT 6 domain; the sequence is ETRKPLDSVV…KHLPESLYPH (92 aa). The segment at 1020–1055 is disordered; the sequence is VSASKDDGPDHLSVEGNETNTMGTNDKESPLLNGSG. Over residues 1023 to 1032 the composition is skewed to basic and acidic residues; it reads SKDDGPDHLS. Threonine 1064 carries the post-translational modification Phosphothreonine. The segment covering 1097-1116 has biased composition (low complexity); sequence SRSSCNSASSTPDSARSVRS. 3 disordered regions span residues 1097 to 1119, 1203 to 1255, and 1491 to 1515; these read SRSSCNSASSTPDSARSVRSGRS, VTQA…TQEE, and KKGGPGLPQKRKTPAENVVKRPRVH. Over residues 1217 to 1229 the composition is skewed to pro residues; it reads PPVAERPLIPEPQ. Residues 1255 to 1347 form the BRCT 7 domain; the sequence is ETHRKVKKQY…RFVQEEDYEW (93 aa). Positions 1510–1513 match the Nuclear localization signal motif; sequence KRPR.

It belongs to the TOPBP1 family. In terms of assembly, interacts (via BRCT domains 1 and 2) with (phosphorylated) MDC1; promoting TOPBP1 recruitment to DNA damage sites during mitosis. Interacts (via BRCT domains 7 and 8) with (autophosphorylated) ATR; promoting activation of ATR. Interacts (via BRCT domains 7 and 8) with (phosphorylated) POLQ; specifically binds POLQ phosphorylated by PLK1, promoting POLQ recruitment to DNA damage sites. Interacts (via BRCT domains 1 and 2) with (phosphorylated) RAD9A. Interacts (via BRCT domain 2) with (phosphorylated) TP53BP1. Interacts (via BRCT domain 2) with (phosphorylated) HTATSF1. Interacts (via BRCT domains 7 and 8) with (phosphorylated) RAD51; promoting RAD51 recruitment to damaged chromatin. Interacts with CIP2A; forming the CIP2A-TOPBP1 complex. Interacts with POLE. Interacts with UBR5. Interacts with E2F1. Interacts with PML. Interacts with SMARCA2. Interacts with SMARCA4. Interacts with RHNO1. May interact with TOP2B. Interacts with TICRR. Interacts with HELB. In terms of processing, phosphorylated on serine and threonine residues in response to X-ray irradiation. Post-translationally, ubiquitinated and degraded by the proteasome. X-ray irradiation reduces ubiquitination. Deubiquitinated by USP13; leading to TOPBP1 stabilizion and activation of the ATR-TOPBP1 axis pathway. Highly expressed in testis.

The protein resides in the nucleus. Its subcellular location is the chromosome. The protein localises to the cytoplasm. It is found in the cytoskeleton. It localises to the microtubule organizing center. The protein resides in the centrosome. Its subcellular location is the spindle pole. Its function is as follows. Scaffold protein that acts as a key protein-protein adapter in DNA replication and DNA repair. Composed of multiple BRCT domains, which specifically recognize and bind phosphorylated proteins, bringing proteins together into functional combinations. Required for DNA replication initiation but not for the formation of pre-replicative complexes or the elongation stages. Necessary for the loading of replication factors onto chromatin, including GMNC, CDC45, DNA polymerases and components of the GINS complex. Plays a central role in DNA repair by bridging proteins and promoting recruitment of proteins to DNA damage sites. Involved in double-strand break (DSB) repair via homologous recombination in S-phase by promoting the exchange between the DNA replication factor A (RPA) complex and RAD51. Mechanistically, TOPBP1 is recruited to DNA damage sites in S-phase via interaction with phosphorylated HTATSF1, and promotes the loading of RAD51, thereby facilitating RAD51 nucleofilaments formation and RPA displacement, followed by homologous recombination. Involved in microhomology-mediated end-joining (MMEJ) DNA repair by promoting recruitment of polymerase theta (POLQ) to DNA damage sites during mitosis. MMEJ is an alternative non-homologous end-joining (NHEJ) machinery that takes place during mitosis to repair DSBs in DNA that originate in S-phase. Recognizes and binds POLQ phosphorylated by PLK1, enabling its recruitment to DSBs for subsequent repair. Involved in G1 DNA damage checkpoint by acting as a molecular adapter that couples TP53BP1 and the 9-1-1 complex. In response to DNA damage, triggers the recruitment of checkpoint signaling proteins on chromatin, which activate the CHEK1 signaling pathway and block S-phase progression. Acts as an activator of the kinase activity of ATR. Also required for chromosomal stability when DSBs occur during mitosis by forming filamentous assemblies that bridge MDC1 and tether broken chromosomes during mitosis. Together with CIP2A, plays an essential role in the response to genome instability generated by the presence of acentric chromosome fragments derived from shattered chromosomes within micronuclei. Micronuclei, which are frequently found in cancer cells, consist of chromatin surrounded by their own nuclear membrane: following breakdown of the micronuclear envelope, a process associated with chromothripsis, the CIP2A-TOPBP1 complex tethers chromosome fragments during mitosis to ensure clustered segregation of the fragments to a single daughter cell nucleus, facilitating re-ligation with limited chromosome scattering and loss. Recruits the SWI/SNF chromatin remodeling complex to E2F1-responsive promoters, thereby down-regulating E2F1 activity and inhibiting E2F1-dependent apoptosis during G1/S transition and after DNA damage. The chain is DNA topoisomerase 2-binding protein 1 from Mus musculus (Mouse).